Reading from the N-terminus, the 140-residue chain is ATP synthase epsilon chain (140 aa).

Belongs to the ATPase epsilon chain family. As to quaternary structure, F-type ATPases have 2 components, CF(1) - the catalytic core - and CF(0) - the membrane proton channel. CF(1) has five subunits: alpha(3), beta(3), gamma(1), delta(1), epsilon(1). CF(0) has three main subunits: a, b and c.

The protein localises to the cell membrane. Produces ATP from ADP in the presence of a proton gradient across the membrane. In Dehalococcoides mccartyi (strain ATCC BAA-2100 / JCM 16839 / KCTC 5957 / BAV1), this protein is ATP synthase epsilon chain.